Here is a 214-residue protein sequence, read N- to C-terminus: MQLFHLCLIISCTCPTVQASKLCLGWLWGMDIDPYKEFGATVELLSFLPSDFFPSVRDLLDTASALYREALESPEHCSPHHTALRQAILCWVELMTLATWVGNNLQDPASRDLVVNYVNTNMGLKIRQLLWFHISCLTFGRETVLEYLVSFGVWIRTPPAYRPPNAPILSTLPETTVVRRRDRGRSPRRRTPSPRRRRSQSPRRRRSQSRESQC.

Positions 1 to 19 are cleaved as a signal peptide; it reads MQLFHLCLIISCTCPTVQA. Residues 25-27 form an HBEAG region; sequence GWL. The interval 165–214 is disordered; the sequence is NAPILSTLPETTVVRRRDRGRSPRRRTPSPRRRRSQSPRRRRSQSRESQC. The span at 178–207 shows a compositional bias: basic residues; sequence VRRRDRGRSPRRRTPSPRRRRSQSPRRRRS. A 1; half-length repeat occupies 186–192; it reads SPRRRTP. The tract at residues 186–208 is 3 X 8 AA repeats of S-P-R-R-R-R-S-Q; it reads SPRRRTPSPRRRRSQSPRRRRSQ. The propeptide occupies 186–214; sequence SPRRRTPSPRRRRSQSPRRRRSQSRESQC. 2 repeat units span residues 193-200 and 201-208.

It belongs to the orthohepadnavirus precore antigen family. In terms of assembly, homodimerizes. Post-translationally, phosphorylated. In terms of processing, cleaved by host furin.

The protein resides in the secreted. It localises to the host nucleus. May regulate immune response to the intracellular capsid in acting as a T-cell tolerogen, by having an immunoregulatory effect which prevents destruction of infected cells by cytotoxic T-cells. This immune regulation may predispose to chronicity during perinatal infections and prevent severe liver injury during adult infections. The chain is External core antigen from Hepatitis B virus genotype A2 (isolate Japan/11D11HCCW/1998) (HBV-A).